Consider the following 537-residue polypeptide: Putative cysteine ligase BshC (537 aa).

Positions 422-450 (IEKVEGMIEQQRRLNKDLLDEVAGNQNNI) form a coiled coil.

The protein belongs to the BshC family.

Its function is as follows. Involved in bacillithiol (BSH) biosynthesis. May catalyze the last step of the pathway, the addition of cysteine to glucosamine malate (GlcN-Mal) to generate BSH. The sequence is that of Putative cysteine ligase BshC from Staphylococcus aureus (strain COL).